A 694-amino-acid chain; its full sequence is Elongation factor G (694 aa).

Residues 6 to 288 (KLYRNIGIAA…GVIEYLPSPT (283 aa)) enclose the tr-type G domain. GTP-binding positions include 15 to 22 (AHVDAGKT), 86 to 90 (DTPGH), and 140 to 143 (NKMD).

Belongs to the TRAFAC class translation factor GTPase superfamily. Classic translation factor GTPase family. EF-G/EF-2 subfamily.

Its subcellular location is the cytoplasm. Catalyzes the GTP-dependent ribosomal translocation step during translation elongation. During this step, the ribosome changes from the pre-translocational (PRE) to the post-translocational (POST) state as the newly formed A-site-bound peptidyl-tRNA and P-site-bound deacylated tRNA move to the P and E sites, respectively. Catalyzes the coordinated movement of the two tRNA molecules, the mRNA and conformational changes in the ribosome. The sequence is that of Elongation factor G from Legionella pneumophila (strain Lens).